An 835-amino-acid polypeptide reads, in one-letter code: Protein translocase subunit SecA (835 aa).

ATP-binding positions include Gln-85, 103–107 (GEGKT), and Asp-492. The segment at 788 to 807 (VQGEAVHPSSDGEEAKKKPV) is disordered. Positions 819, 821, 830, and 831 each coordinate Zn(2+).

This sequence belongs to the SecA family. As to quaternary structure, monomer and homodimer. Part of the essential Sec protein translocation apparatus which comprises SecA, SecYEG and auxiliary proteins SecDF. Other proteins may also be involved. Zn(2+) serves as cofactor.

The protein localises to the cell membrane. The protein resides in the cytoplasm. The enzyme catalyses ATP + H2O + cellular proteinSide 1 = ADP + phosphate + cellular proteinSide 2.. Functionally, part of the Sec protein translocase complex. Interacts with the SecYEG preprotein conducting channel. Has a central role in coupling the hydrolysis of ATP to the transfer of proteins into and across the cell membrane, serving as an ATP-driven molecular motor driving the stepwise translocation of polypeptide chains across the membrane. This Bacillus cereus (strain B4264) protein is Protein translocase subunit SecA.